A 454-amino-acid polypeptide reads, in one-letter code: tRNA modification GTPase MnmE (454 aa).

3 residues coordinate (6S)-5-formyl-5,6,7,8-tetrahydrofolate: R23, E80, and K120. One can recognise a TrmE-type G domain in the interval 216 to 377 (GMKVVIAGRP…LRNHLKQSMG (162 aa)). Residue N226 participates in K(+) binding. GTP-binding positions include 226 to 231 (NAGKSS), 245 to 251 (TDIAGTT), 270 to 273 (DTAG), 335 to 338 (NKAD), and 358 to 360 (SAR). A Mg(2+)-binding site is contributed by S230. Residues T245, I247, and T250 each coordinate K(+). T251 contributes to the Mg(2+) binding site. K454 is a (6S)-5-formyl-5,6,7,8-tetrahydrofolate binding site.

This sequence belongs to the TRAFAC class TrmE-Era-EngA-EngB-Septin-like GTPase superfamily. TrmE GTPase family. Homodimer. Heterotetramer of two MnmE and two MnmG subunits. K(+) is required as a cofactor.

It localises to the cytoplasm. Exhibits a very high intrinsic GTPase hydrolysis rate. Involved in the addition of a carboxymethylaminomethyl (cmnm) group at the wobble position (U34) of certain tRNAs, forming tRNA-cmnm(5)s(2)U34. This Salmonella typhi protein is tRNA modification GTPase MnmE.